The sequence spans 243 residues: Adenylate dimethylallyltransferase (243 aa).

It catalyses the reaction dimethylallyl diphosphate + AMP = N(6)-(dimethylallyl)adenosine 5'-phosphate + diphosphate. In terms of biological role, transfers dimethylallyl groups to AMP as part of the biosynthesis of cytokinin phytohormones. This is Adenylate dimethylallyltransferase (tzs) from Agrobacterium fabrum (strain C58 / ATCC 33970) (Agrobacterium tumefaciens (strain C58)).